Reading from the N-terminus, the 2102-residue chain is Probable serine/threonine-protein kinase DDB_G0272282 (2102 aa).

Positions 1-118 (MKYQLSILGD…NWLVPQNEPA (118 aa)) constitute a PX domain. The PH domain maps to 124 to 222 (NPDKSGYLIK…WIKAIELSQQ (99 aa)). Residues 225 to 240 (QDQEQYRKQEEEERQK) show a composition bias toward basic and acidic residues. 9 disordered regions span residues 225-289 (QDQE…SDGS), 302-390 (GPNN…SDLN), 426-558 (EQPG…SASP), 574-665 (SNLP…PLPN), 685-768 (NNNS…NNSL), 804-842 (KKKE…GTLR), 1029-1051 (QQQQ…SSVN), 1106-1224 (GTPT…PQPQ), and 1476-1514 (SSKV…SSLT). Composition is skewed to low complexity over residues 256–281 (STLT…LPSS) and 304–327 (NNSN…NNHN). The segment covering 328–348 (HYNHHNNNHNNSHHHHHHHNG) has biased composition (basic residues). Low complexity-rich tracts occupy residues 353–376 (SSQV…STSL) and 426–437 (EQPGSYQQPQHQ). The segment covering 438-450 (QGGGGGGGGGGGN) has biased composition (gly residues). Residues 466 to 484 (SNLSSRSNSNSSGSSSGSG) show a composition bias toward low complexity. Positions 485 to 501 (SSSGSGPIGSGGVGGGL) are enriched in gly residues. Low complexity-rich tracts occupy residues 535-558 (SNSS…SASP) and 587-626 (NANN…NNGN). Residues 627–659 (TASGSSCNTTPNLLPAPTNVSPIQNRARSSPMT) are compositionally biased toward polar residues. A compositionally biased stretch (basic and acidic residues) spans 804 to 824 (KKKEKDKEKEKDKEKEKEKEI). Residues 827–841 (NISTSTTPNKKNGTL) show a composition bias toward polar residues. The segment covering 1106–1118 (GTPTTTSGDNTPL) has biased composition (polar residues). Low complexity-rich tracts occupy residues 1119-1182 (TNTA…NSSI), 1196-1221 (EQQQ…QQQP), and 1476-1492 (SSKV…SPIL). Residues 1493 to 1507 (SSPPPPMKQPPPQVI) are compositionally biased toward pro residues. Residues 1527-1851 (FEIIKPISRG…AYEVKTHPFF (325 aa)) form the Protein kinase domain. Residues 1533-1541 (ISRGAFGRV) and Lys1556 contribute to the ATP site. The active-site Proton acceptor is Asp1650. Low complexity-rich tracts occupy residues 1687-1729 (NTNT…SQTN), 1902-1999 (SQPQ…NINN), and 2006-2052 (NNNS…QINN). Disordered stretches follow at residues 1687–1741 (NTNT…KNTL) and 1902–2070 (SQPQ…SKIE). In terms of domain architecture, AGC-kinase C-terminal spans 1852 to 1911 (ANVNWDTLIDQEMDNIFLPKPENNYDTDYFWDRQSMYDDEAEDDFLTINQSQPQHQSQHQ).

Belongs to the protein kinase superfamily. AGC Ser/Thr protein kinase family.

It carries out the reaction L-seryl-[protein] + ATP = O-phospho-L-seryl-[protein] + ADP + H(+). It catalyses the reaction L-threonyl-[protein] + ATP = O-phospho-L-threonyl-[protein] + ADP + H(+). The polypeptide is Probable serine/threonine-protein kinase DDB_G0272282 (Dictyostelium discoideum (Social amoeba)).